The primary structure comprises 115 residues: Holo-[acyl-carrier-protein] synthase (115 aa).

Positions 8 and 50 each coordinate Mg(2+).

The protein belongs to the P-Pant transferase superfamily. AcpS family. The cofactor is Mg(2+).

The protein localises to the cytoplasm. The catalysed reaction is apo-[ACP] + CoA = holo-[ACP] + adenosine 3',5'-bisphosphate + H(+). Transfers the 4'-phosphopantetheine moiety from coenzyme A to a Ser of acyl-carrier-protein. The polypeptide is Holo-[acyl-carrier-protein] synthase (Pseudarthrobacter chlorophenolicus (strain ATCC 700700 / DSM 12829 / CIP 107037 / JCM 12360 / KCTC 9906 / NCIMB 13794 / A6) (Arthrobacter chlorophenolicus)).